The following is a 198-amino-acid chain: ATP-dependent Clp protease proteolytic subunit (198 aa).

The active-site Nucleophile is S103. H128 is an active-site residue.

The protein belongs to the peptidase S14 family. Fourteen ClpP subunits assemble into 2 heptameric rings which stack back to back to give a disk-like structure with a central cavity, resembling the structure of eukaryotic proteasomes.

It localises to the cytoplasm. It catalyses the reaction Hydrolysis of proteins to small peptides in the presence of ATP and magnesium. alpha-casein is the usual test substrate. In the absence of ATP, only oligopeptides shorter than five residues are hydrolyzed (such as succinyl-Leu-Tyr-|-NHMec, and Leu-Tyr-Leu-|-Tyr-Trp, in which cleavage of the -Tyr-|-Leu- and -Tyr-|-Trp bonds also occurs).. Its function is as follows. Cleaves peptides in various proteins in a process that requires ATP hydrolysis. Has a chymotrypsin-like activity. Plays a major role in the degradation of misfolded proteins. This chain is ATP-dependent Clp protease proteolytic subunit, found in Vesicomyosocius okutanii subsp. Calyptogena okutanii (strain HA).